Here is a 290-residue protein sequence, read N- to C-terminus: 4-hydroxybenzoate octaprenyltransferase (290 aa).

8 consecutive transmembrane segments (helical) span residues 23–43, 46–66, 99–119, 141–161, 163–183, 213–233, 234–254, and 268–288; these read IGAL…TPGV, LWIL…GCVV, LFVV…TMTI, LPQV…FAAV, ESVP…AVAY, LIIG…GELN, GLGW…VYQQ, and AFMN…MSYW.

The protein belongs to the UbiA prenyltransferase family. The cofactor is Mg(2+).

Its subcellular location is the cell inner membrane. It catalyses the reaction all-trans-octaprenyl diphosphate + 4-hydroxybenzoate = 4-hydroxy-3-(all-trans-octaprenyl)benzoate + diphosphate. It functions in the pathway cofactor biosynthesis; ubiquinone biosynthesis. Its function is as follows. Catalyzes the prenylation of para-hydroxybenzoate (PHB) with an all-trans polyprenyl group. Mediates the second step in the final reaction sequence of ubiquinone-8 (UQ-8) biosynthesis, which is the condensation of the polyisoprenoid side chain with PHB, generating the first membrane-bound Q intermediate 3-octaprenyl-4-hydroxybenzoate. This chain is 4-hydroxybenzoate octaprenyltransferase, found in Escherichia coli O6:K15:H31 (strain 536 / UPEC).